A 545-amino-acid chain; its full sequence is CTP synthase (545 aa).

An amidoligase domain region spans residues 1 to 266 (MTTKYIFVTG…DQLVVDRFGL (266 aa)). Serine 14 is a binding site for CTP. Serine 14 lines the UTP pocket. ATP contacts are provided by residues 15–20 (SLGKGI) and aspartate 72. Positions 72 and 140 each coordinate Mg(2+). CTP contacts are provided by residues 147 to 149 (DIE), 187 to 192 (KTKPTQ), and lysine 223. UTP contacts are provided by residues 187–192 (KTKPTQ) and lysine 223. 239–241 (KDV) is a binding site for ATP. Positions 291–542 (TIGMVGKYVS…IQAAGEYMKR (252 aa)) constitute a Glutamine amidotransferase type-1 domain. Glycine 352 contacts L-glutamine. Cysteine 379 functions as the Nucleophile; for glutamine hydrolysis in the catalytic mechanism. L-glutamine contacts are provided by residues 380-383 (LGMQ), glutamate 403, and arginine 470. Residues histidine 515 and glutamate 517 contribute to the active site.

Belongs to the CTP synthase family. As to quaternary structure, homotetramer.

It catalyses the reaction UTP + L-glutamine + ATP + H2O = CTP + L-glutamate + ADP + phosphate + 2 H(+). The enzyme catalyses L-glutamine + H2O = L-glutamate + NH4(+). It carries out the reaction UTP + NH4(+) + ATP = CTP + ADP + phosphate + 2 H(+). It functions in the pathway pyrimidine metabolism; CTP biosynthesis via de novo pathway; CTP from UDP: step 2/2. Allosterically activated by GTP, when glutamine is the substrate; GTP has no effect on the reaction when ammonia is the substrate. The allosteric effector GTP functions by stabilizing the protein conformation that binds the tetrahedral intermediate(s) formed during glutamine hydrolysis. Inhibited by the product CTP, via allosteric rather than competitive inhibition. Its function is as follows. Catalyzes the ATP-dependent amination of UTP to CTP with either L-glutamine or ammonia as the source of nitrogen. Regulates intracellular CTP levels through interactions with the four ribonucleotide triphosphates. In Tolumonas auensis (strain DSM 9187 / NBRC 110442 / TA 4), this protein is CTP synthase.